The following is a 49-amino-acid chain: Splenin (49 aa).

An LEM-like domain is found at 4–47 (LEDPSVLTKEKLKSELVANNVTLPAGEQRKEVYVELYLQHLTAL). The interval 32–36 (RKEVY) is essential for biological activity.

Belongs to the thymopoietin family.

In terms of biological role, hormone of the spleen with pleiotropic actions on prothymocytes, mature T-cells, the nicotinic acetylcholine receptor, and pituitary corticotrophs. The sequence is that of Splenin (SP) from Bos taurus (Bovine).